The chain runs to 458 residues: UDP-N-acetylglucosamine 1-carboxyvinyltransferase (458 aa).

34 to 35 (KN) provides a ligand contact to phosphoenolpyruvate. A UDP-N-acetyl-alpha-D-glucosamine-binding site is contributed by arginine 104. Residue cysteine 128 is the Proton donor of the active site. Cysteine 128 bears the 2-(S-cysteinyl)pyruvic acid O-phosphothioketal mark. UDP-N-acetyl-alpha-D-glucosamine contacts are provided by aspartate 319 and isoleucine 341.

It belongs to the EPSP synthase family. MurA subfamily.

It localises to the cytoplasm. It carries out the reaction phosphoenolpyruvate + UDP-N-acetyl-alpha-D-glucosamine = UDP-N-acetyl-3-O-(1-carboxyvinyl)-alpha-D-glucosamine + phosphate. It participates in cell wall biogenesis; peptidoglycan biosynthesis. Functionally, cell wall formation. Adds enolpyruvyl to UDP-N-acetylglucosamine. The chain is UDP-N-acetylglucosamine 1-carboxyvinyltransferase from Prochlorococcus marinus (strain MIT 9515).